The following is a 349-amino-acid chain: Deoxyguanosinetriphosphate triphosphohydrolase-like protein (349 aa).

The 118-residue stretch at Arg-80–Val-197 folds into the HD domain.

It belongs to the dGTPase family. Type 2 subfamily.

The polypeptide is Deoxyguanosinetriphosphate triphosphohydrolase-like protein (Clostridium tetani (strain Massachusetts / E88)).